A 612-amino-acid chain; its full sequence is Threonine--tRNA ligase (612 aa).

Residues 218-509 form a catalytic region; sequence DHRKLGVELG…LSEHFGGNFP (292 aa). The Zn(2+) site is built by Cys-310, His-361, and His-486.

It belongs to the class-II aminoacyl-tRNA synthetase family. As to quaternary structure, homodimer. Requires Zn(2+) as cofactor.

The protein resides in the cytoplasm. It carries out the reaction tRNA(Thr) + L-threonine + ATP = L-threonyl-tRNA(Thr) + AMP + diphosphate + H(+). Its function is as follows. Catalyzes the attachment of threonine to tRNA(Thr) in a two-step reaction: L-threonine is first activated by ATP to form Thr-AMP and then transferred to the acceptor end of tRNA(Thr). Also edits incorrectly charged L-seryl-tRNA(Thr). The sequence is that of Threonine--tRNA ligase from Helicobacter pylori (strain J99 / ATCC 700824) (Campylobacter pylori J99).